The following is a 539-amino-acid chain: Glucans biosynthesis protein D (539 aa).

Residues Met-1–Ala-29 constitute a signal peptide (tat-type signal).

Belongs to the OpgD/OpgG family. Post-translationally, predicted to be exported by the Tat system. The position of the signal peptide cleavage has not been experimentally proven.

It localises to the periplasm. Its pathway is glycan metabolism; osmoregulated periplasmic glucan (OPG) biosynthesis. In terms of biological role, probably involved in the control of the structural glucose backbone of osmoregulated periplasmic glucans (OPGs). This is Glucans biosynthesis protein D from Pseudomonas savastanoi pv. phaseolicola (strain 1448A / Race 6) (Pseudomonas syringae pv. phaseolicola (strain 1448A / Race 6)).